We begin with the raw amino-acid sequence, 512 residues long: Histidine ammonia-lyase (512 aa).

The 5-imidazolinone (Cys-Gly) cross-link spans C143–G145. Residue S144 is modified to 2,3-didehydroalanine (Ser).

The protein belongs to the PAL/histidase family. Contains an active site 4-methylidene-imidazol-5-one (MIO), which is formed autocatalytically by cyclization and dehydration of residues Cys-Ser-Gly.

The protein resides in the cytoplasm. The enzyme catalyses L-histidine = trans-urocanate + NH4(+). It functions in the pathway amino-acid degradation; L-histidine degradation into L-glutamate; N-formimidoyl-L-glutamate from L-histidine: step 1/3. The sequence is that of Histidine ammonia-lyase from Streptomyces coelicolor (strain ATCC BAA-471 / A3(2) / M145).